A 333-amino-acid polypeptide reads, in one-letter code: L-lactate dehydrogenase B chain (333 aa).

Residues 29–57 and arginine 99 contribute to the NAD(+) site; that span reads GQVG…WEDK. 3 residues coordinate substrate: arginine 106, asparagine 138, and arginine 169. Asparagine 138 contributes to the NAD(+) binding site. Histidine 193 functions as the Proton acceptor in the catalytic mechanism. A substrate-binding site is contributed by threonine 248.

It belongs to the LDH/MDH superfamily. LDH family. Homotetramer.

The protein localises to the cytoplasm. The enzyme catalyses (S)-lactate + NAD(+) = pyruvate + NADH + H(+). It participates in fermentation; pyruvate fermentation to lactate; (S)-lactate from pyruvate: step 1/1. Interconverts simultaneously and stereospecifically pyruvate and lactate with concomitant interconversion of NADH and NAD(+). The chain is L-lactate dehydrogenase B chain (LDHB) from Trachemys scripta elegans (Red-eared slider turtle).